The sequence spans 201 residues: Two-component response regulator ORR9 (201 aa).

Positions 10–142 (HVLAVDDSLP…DMSKLKPHIL (133 aa)) constitute a Response regulatory domain. Residue aspartate 75 is modified to 4-aspartylphosphate. Positions 149-201 (HYQQEQNLQSNSESNNSSNPTSENSSSSTSSNSHKRKAVDEEILPHTIRPRHS) are disordered. Positions 158–180 (SNSESNNSSNPTSENSSSSTSSN) are enriched in low complexity.

This sequence belongs to the ARR family. Type-A subfamily. Two-component system major event consists of a His-to-Asp phosphorelay between a sensor histidine kinase (HK) and a response regulator (RR). In plants, the His-to-Asp phosphorelay involves an additional intermediate named Histidine-containing phosphotransfer protein (HPt). This multistep phosphorelay consists of a His-Asp-His-Asp sequential transfer of a phosphate group between first a His and an Asp of the HK protein, followed by the transfer to a conserved His of the HPt protein and finally the transfer to an Asp in the receiver domain of the RR protein.

Functionally, functions as a response regulator involved in His-to-Asp phosphorelay signal transduction system. Phosphorylation of the Asp residue in the receiver domain activates the ability of the protein to promote the transcription of target genes. Type-A response regulators seem to act as negative regulators of the cytokinin signaling. The chain is Two-component response regulator ORR9 from Oryza sativa subsp. japonica (Rice).